A 249-amino-acid polypeptide reads, in one-letter code: Proteasome subunit alpha type-7-B (249 aa).

This sequence belongs to the peptidase T1A family. The 26S proteasome consists of a 20S proteasome core and two 19S regulatory subunits. The 20S proteasome core is composed of 28 subunits that are arranged in four stacked rings, resulting in a barrel-shaped structure. The two end rings are each formed by seven alpha subunits, and the two central rings are each formed by seven beta subunits. The catalytic chamber with the active sites is on the inside of the barrel.

Its subcellular location is the cytoplasm. It localises to the nucleus. The proteasome is a multicatalytic proteinase complex which is characterized by its ability to cleave peptides with Arg, Phe, Tyr, Leu, and Glu adjacent to the leaving group at neutral or slightly basic pH. The proteasome has an ATP-dependent proteolytic activity. In Oryza sativa subsp. indica (Rice), this protein is Proteasome subunit alpha type-7-B (PAD1).